The following is a 212-amino-acid chain: Leucine efflux protein (212 aa).

6 helical membrane-spanning segments follow: residues 12–32 (TYLV…LFVL), 49–69 (GVFI…ATLI), 71–91 (TTPI…LYLG), 122–142 (ILSL…VQFI), 153–173 (FFIL…FLII), and 188–208 (LAKV…ARLA).

It belongs to the Rht family.

The protein resides in the cell inner membrane. It catalyses the reaction L-leucine(in) + H(+)(out) = L-leucine(out) + H(+)(in). In terms of biological role, exporter of leucine. The protein is Leucine efflux protein (leuE) of Escherichia coli O157:H7.